The following is a 314-amino-acid chain: Homoserine kinase (314 aa).

95–105 lines the ATP pocket; the sequence is PHSRGLGSSAA.

This sequence belongs to the GHMP kinase family. Homoserine kinase subfamily.

The protein resides in the cytoplasm. The catalysed reaction is L-homoserine + ATP = O-phospho-L-homoserine + ADP + H(+). Its pathway is amino-acid biosynthesis; L-threonine biosynthesis; L-threonine from L-aspartate: step 4/5. Functionally, catalyzes the ATP-dependent phosphorylation of L-homoserine to L-homoserine phosphate. The polypeptide is Homoserine kinase (Mycolicibacterium vanbaalenii (strain DSM 7251 / JCM 13017 / BCRC 16820 / KCTC 9966 / NRRL B-24157 / PYR-1) (Mycobacterium vanbaalenii)).